The primary structure comprises 292 residues: Elongation factor Ts (292 aa).

An involved in Mg(2+) ion dislocation from EF-Tu region spans residues 79 to 82 (TDFV).

Belongs to the EF-Ts family.

It localises to the cytoplasm. Its function is as follows. Associates with the EF-Tu.GDP complex and induces the exchange of GDP to GTP. It remains bound to the aminoacyl-tRNA.EF-Tu.GTP complex up to the GTP hydrolysis stage on the ribosome. The sequence is that of Elongation factor Ts from Xylella fastidiosa (strain 9a5c).